The primary structure comprises 173 residues: NADH-quinone oxidoreductase subunit B (173 aa).

[4Fe-4S] cluster-binding residues include cysteine 46, cysteine 47, cysteine 112, and cysteine 142.

It belongs to the complex I 20 kDa subunit family. NDH-1 is composed of 14 different subunits. Subunits NuoB, C, D, E, F, and G constitute the peripheral sector of the complex. [4Fe-4S] cluster is required as a cofactor.

It is found in the cell membrane. The enzyme catalyses a quinone + NADH + 5 H(+)(in) = a quinol + NAD(+) + 4 H(+)(out). Its function is as follows. NDH-1 shuttles electrons from NADH, via FMN and iron-sulfur (Fe-S) centers, to quinones in the respiratory chain. The immediate electron acceptor for the enzyme in this species is believed to be a menaquinone. Couples the redox reaction to proton translocation (for every two electrons transferred, four hydrogen ions are translocated across the cytoplasmic membrane), and thus conserves the redox energy in a proton gradient. The polypeptide is NADH-quinone oxidoreductase subunit B (Desulfitobacterium hafniense (strain DSM 10664 / DCB-2)).